Reading from the N-terminus, the 365-residue chain is Phosphoserine aminotransferase (365 aa).

R40 contributes to the L-glutamate binding site. Residues 74–75 (AS), F99, T155, D177, and Q200 contribute to the pyridoxal 5'-phosphate site. K201 bears the N6-(pyridoxal phosphate)lysine mark. 241–242 (NT) lines the pyridoxal 5'-phosphate pocket.

It belongs to the class-V pyridoxal-phosphate-dependent aminotransferase family. SerC subfamily. As to quaternary structure, homodimer. Requires pyridoxal 5'-phosphate as cofactor.

The protein resides in the cytoplasm. It carries out the reaction O-phospho-L-serine + 2-oxoglutarate = 3-phosphooxypyruvate + L-glutamate. The enzyme catalyses 4-(phosphooxy)-L-threonine + 2-oxoglutarate = (R)-3-hydroxy-2-oxo-4-phosphooxybutanoate + L-glutamate. It functions in the pathway amino-acid biosynthesis; L-serine biosynthesis; L-serine from 3-phospho-D-glycerate: step 2/3. Its function is as follows. Catalyzes the reversible conversion of 3-phosphohydroxypyruvate to phosphoserine and of 3-hydroxy-2-oxo-4-phosphonooxybutanoate to phosphohydroxythreonine. The protein is Phosphoserine aminotransferase of Lactococcus lactis subsp. lactis (strain IL1403) (Streptococcus lactis).